Consider the following 338-residue polypeptide: Sporulation-specific protein 4 (338 aa).

Residues 14–37 are disordered; sequence QEENKNFLHKNTNEPNEMEQSQTQ. A compositionally biased stretch (polar residues) spans 22–37; the sequence is HKNTNEPNEMEQSQTQ.

In terms of biological role, not essential for sporulation. Might be a component of the cell wall. The sequence is that of Sporulation-specific protein 4 (SPS4) from Saccharomyces cerevisiae (strain ATCC 204508 / S288c) (Baker's yeast).